Here is a 377-residue protein sequence, read N- to C-terminus: D-alanine--D-alanine ligase (377 aa).

One can recognise an ATP-grasp domain in the interval lysine 140–aspartate 349. Valine 170–leucine 225 is an ATP binding site. Mg(2+) is bound by residues aspartate 303, glutamate 316, and asparagine 318.

Belongs to the D-alanine--D-alanine ligase family. Requires Mg(2+) as cofactor. Mn(2+) is required as a cofactor.

The protein resides in the cytoplasm. The catalysed reaction is 2 D-alanine + ATP = D-alanyl-D-alanine + ADP + phosphate + H(+). It functions in the pathway cell wall biogenesis; peptidoglycan biosynthesis. Cell wall formation. The sequence is that of D-alanine--D-alanine ligase from Leuconostoc mesenteroides.